A 223-amino-acid chain; its full sequence is Voltage-dependent calcium channel gamma-1 subunit (223 aa).

The Cytoplasmic portion of the chain corresponds to Met-1–Arg-10. A helical membrane pass occupies residues Val-11 to Thr-29. The Extracellular segment spans residues Asp-30–Ala-109. N-linked (GlcNAc...) asparagine glycans are attached at residues Asn-43 and Asn-80. A disulfide bridge links Cys-57 with Cys-81. Residues Ala-110 to Phe-130 form a helical membrane-spanning segment. At Gly-131 to Asp-135 the chain is on the cytoplasmic side. The helical transmembrane segment at Tyr-136–Val-156 threads the bilayer. Residues Glu-157 to Ser-180 are Extracellular-facing. The chain crosses the membrane as a helical span at residues Trp-181–Leu-205. Over Pro-206 to His-223 the chain is Cytoplasmic.

Belongs to the PMP-22/EMP/MP20 family. CACNG subfamily. Component of a calcium channel complex consisting of a pore-forming alpha subunit (CACNA1S) and the ancillary subunits CACNB1 or CACNB2, CACNG1 and CACNA2D1. The channel complex contains alpha, beta, gamma and delta subunits in a 1:1:1:1 ratio, i.e. it contains either CACNB1 or CACNB2. In terms of processing, N-glycosylated. In terms of tissue distribution, skeletal muscle.

It is found in the cell membrane. The protein localises to the sarcolemma. In terms of biological role, regulatory subunit of the voltage-gated calcium channel that gives rise to L-type calcium currents in skeletal muscle. Regulates channel inactivation kinetics. This is Voltage-dependent calcium channel gamma-1 subunit (Cacng1) from Rattus norvegicus (Rat).